The sequence spans 166 residues: Methylmalonyl-CoA epimerase, mitochondrial (166 aa).

A mitochondrion-targeting transit peptide spans 1-23; the sequence is MFKQLIKTTLTNSRSFSTNTGSG. Residues 37–166 enclose the VOC domain; the sequence is KLNHVAIATP…NGVLVELEEK (130 aa). Co(2+) is bound by residues histidine 40, histidine 112, and glutamate 162.

It belongs to the methylmalonyl-CoA epimerase family.

The protein localises to the mitochondrion. The enzyme catalyses (R)-methylmalonyl-CoA = (S)-methylmalonyl-CoA. In terms of biological role, methylmalonyl-CoA epimerase involved in propionyl-CoA metabolism. This chain is Methylmalonyl-CoA epimerase, mitochondrial (mcee), found in Dictyostelium discoideum (Social amoeba).